Here is a 336-residue protein sequence, read N- to C-terminus: Ornithine carbamoyltransferase, catabolic (336 aa).

Carbamoyl phosphate is bound by residues 57-60 (STRT), Gln-84, Arg-108, and 135-138 (HPTQ). L-ornithine contacts are provided by residues Asn-168, Asp-232, and 236-237 (SM). Residues 274-275 (CL) and Arg-321 contribute to the carbamoyl phosphate site.

This sequence belongs to the aspartate/ornithine carbamoyltransferase superfamily. OTCase family.

The protein resides in the cytoplasm. The catalysed reaction is carbamoyl phosphate + L-ornithine = L-citrulline + phosphate + H(+). Its pathway is amino-acid degradation; L-arginine degradation via ADI pathway; carbamoyl phosphate from L-arginine: step 2/2. In terms of biological role, reversibly catalyzes the transfer of the carbamoyl group from carbamoyl phosphate (CP) to the N(epsilon) atom of ornithine (ORN) to produce L-citrulline. This chain is Ornithine carbamoyltransferase, catabolic (arcB), found in Ectopseudomonas mendocina (Pseudomonas mendocina).